A 118-amino-acid polypeptide reads, in one-letter code: Hydrogenase maturation factor HypA (118 aa).

His2 is a binding site for Ni(2+). Zn(2+) contacts are provided by Cys74, Cys77, Cys91, and Cys94.

It belongs to the HypA/HybF family.

Involved in the maturation of [NiFe] hydrogenases. Required for nickel insertion into the metal center of the hydrogenase. The sequence is that of Hydrogenase maturation factor HypA from Helicobacter hepaticus (strain ATCC 51449 / 3B1).